Consider the following 713-residue polypeptide: Protein-glucosylgalactosylhydroxylysine glucosidase (713 aa).

The signal sequence occupies residues 1–21 (MIINSQEYLQPPQWWNERVEA). 5 N-linked (GlcNAc...) asparagine glycosylation sites follow: Asn104, Asn160, Asn171, Asn186, and Asn283. A substrate-binding site is contributed by 317 to 318 (WD). A glycan (N-linked (GlcNAc...) asparagine) is linked at Asn361. The active-site Proton donor is Glu451. 2 N-linked (GlcNAc...) asparagine glycosylation sites follow: Asn457 and Asn481. Position 521–522 (521–522 (KQ)) interacts with substrate. N-linked (GlcNAc...) asparagine glycosylation is found at Asn535, Asn576, and Asn662.

Belongs to the glycosyl hydrolase 65 family.

It is found in the secreted. The enzyme catalyses (5R)-5-O-[alpha-D-glucosyl-(1-&gt;2)-beta-D-galactosyl]-5-hydroxy-L-lysyl-[collagen] + H2O = (5R)-5-O-(beta-D-galactosyl)-5-hydroxy-L-lysyl-[collagen] + D-glucose. Functionally, catalyzes the hydrolysis of glucose from the disaccharide unit linked to hydroxylysine residues of collagen and collagen-like proteins. In Dictyostelium discoideum (Social amoeba), this protein is Protein-glucosylgalactosylhydroxylysine glucosidase.